We begin with the raw amino-acid sequence, 358 residues long: 3-isopropylmalate dehydrogenase (358 aa).

Position 77–90 (77–90) interacts with NAD(+); the sequence is GPKWTNLPPDQQPE. Arg98, Arg108, Arg137, and Asp226 together coordinate substrate. Residues Asp226, Asp250, and Asp254 each contribute to the Mg(2+) site. 284 to 296 is an NAD(+) binding site; the sequence is GSAPDIAGKGIAN.

Belongs to the isocitrate and isopropylmalate dehydrogenases family. LeuB type 1 subfamily. As to quaternary structure, homodimer. Requires Mg(2+) as cofactor. Mn(2+) is required as a cofactor.

The protein localises to the cytoplasm. The catalysed reaction is (2R,3S)-3-isopropylmalate + NAD(+) = 4-methyl-2-oxopentanoate + CO2 + NADH. It functions in the pathway amino-acid biosynthesis; L-leucine biosynthesis; L-leucine from 3-methyl-2-oxobutanoate: step 3/4. Catalyzes the oxidation of 3-carboxy-2-hydroxy-4-methylpentanoate (3-isopropylmalate) to 3-carboxy-4-methyl-2-oxopentanoate. The product decarboxylates to 4-methyl-2 oxopentanoate. The polypeptide is 3-isopropylmalate dehydrogenase (leuB) (Haemophilus influenzae (strain ATCC 51907 / DSM 11121 / KW20 / Rd)).